We begin with the raw amino-acid sequence, 527 residues long: Aspartokinase (527 aa).

Residue T333 is modified to Phosphothreonine. The ACT domain maps to 442–527; it reads LVGKHMKQYI…RLEQLKRLGI (86 aa).

Belongs to the aspartokinase family. As to quaternary structure, homohexamer. Interacts with FPR1; the interaction is direct, plays a role in feedback inhibition of aspartokinase by threonine, and inhibited by tacrolimus and sirolimus.

It carries out the reaction L-aspartate + ATP = 4-phospho-L-aspartate + ADP. It participates in amino-acid biosynthesis; L-methionine biosynthesis via de novo pathway; L-homoserine from L-aspartate: step 1/3. It functions in the pathway amino-acid biosynthesis; L-threonine biosynthesis; L-threonine from L-aspartate: step 1/5. With respect to regulation, allosterically inhibited by threonine. Phosphorylates aspartate, the first step in the biosynthesis of amino acids that derive from aspartate (the aspartate family of amino acids), including methioinine and threonine, the latter of which is a precursor to isoleucine. This Saccharomyces cerevisiae (strain ATCC 204508 / S288c) (Baker's yeast) protein is Aspartokinase (HOM3).